Consider the following 103-residue polypeptide: Co-chaperonin GroES (103 aa).

It belongs to the GroES chaperonin family. In terms of assembly, heptamer of 7 subunits arranged in a ring. Interacts with the chaperonin GroEL.

The protein localises to the cytoplasm. In terms of biological role, together with the chaperonin GroEL, plays an essential role in assisting protein folding. The GroEL-GroES system forms a nano-cage that allows encapsulation of the non-native substrate proteins and provides a physical environment optimized to promote and accelerate protein folding. GroES binds to the apical surface of the GroEL ring, thereby capping the opening of the GroEL channel. The polypeptide is Co-chaperonin GroES (Prochlorococcus marinus (strain MIT 9312)).